Consider the following 327-residue polypeptide: Aspartate--ammonia ligase (327 aa).

This sequence belongs to the class-II aminoacyl-tRNA synthetase family. AsnA subfamily.

The protein localises to the cytoplasm. It catalyses the reaction L-aspartate + NH4(+) + ATP = L-asparagine + AMP + diphosphate + H(+). It functions in the pathway amino-acid biosynthesis; L-asparagine biosynthesis; L-asparagine from L-aspartate (ammonia route): step 1/1. The polypeptide is Aspartate--ammonia ligase (Mycoplasmoides gallisepticum (strain R(low / passage 15 / clone 2)) (Mycoplasma gallisepticum)).